Consider the following 134-residue polypeptide: Holo-[acyl-carrier-protein] synthase (134 aa).

Residues Asp8 and Glu59 each contribute to the Mg(2+) site.

Belongs to the P-Pant transferase superfamily. AcpS family. It depends on Mg(2+) as a cofactor.

It localises to the cytoplasm. The enzyme catalyses apo-[ACP] + CoA = holo-[ACP] + adenosine 3',5'-bisphosphate + H(+). Transfers the 4'-phosphopantetheine moiety from coenzyme A to a Ser of acyl-carrier-protein. This is Holo-[acyl-carrier-protein] synthase from Zymomonas mobilis subsp. mobilis (strain ATCC 31821 / ZM4 / CP4).